Reading from the N-terminus, the 115-residue chain is Somatostatin-2 (115 aa).

The first 18 residues, 1 to 18, serve as a signal peptide directing secretion; sequence MKVCRIHCALALLGLALA. Residues 19 to 87 constitute a propeptide that is removed on maturation; the sequence is ICSQGAASQP…KEDLRVELER (69 aa). An intrachain disulfide couples C104 to C115.

Belongs to the somatostatin family.

It localises to the secreted. Functionally, somatostatin inhibits the release of somatotropin. In Oncorhynchus mykiss (Rainbow trout), this protein is Somatostatin-2 (sst2).